A 189-amino-acid polypeptide reads, in one-letter code: Potassium-transporting ATPase KdpC subunit (189 aa).

Residues 11–31 (LFVLLTVITGVLYPVFVTGLA) traverse the membrane as a helical segment.

It belongs to the KdpC family. In terms of assembly, the system is composed of three essential subunits: KdpA, KdpB and KdpC.

Its subcellular location is the cell inner membrane. In terms of biological role, part of the high-affinity ATP-driven potassium transport (or Kdp) system, which catalyzes the hydrolysis of ATP coupled with the electrogenic transport of potassium into the cytoplasm. This subunit acts as a catalytic chaperone that increases the ATP-binding affinity of the ATP-hydrolyzing subunit KdpB by the formation of a transient KdpB/KdpC/ATP ternary complex. This is Potassium-transporting ATPase KdpC subunit from Polynucleobacter asymbioticus (strain DSM 18221 / CIP 109841 / QLW-P1DMWA-1) (Polynucleobacter necessarius subsp. asymbioticus).